A 450-amino-acid chain; its full sequence is 23S rRNA (uracil(1939)-C(5))-methyltransferase RlmD (450 aa).

A TRAM domain is found at 12–70; that stretch reads SKQLSAKLSLSVNQLDHLGAGIAQHQGKVVFIPGALPDETVTVQLTEQKKNYARAKLIK. Positions 83, 89, 92, and 171 each coordinate [4Fe-4S] cluster. Residues Q283, F312, N317, E333, D360, and D380 each contribute to the S-adenosyl-L-methionine site. C406 acts as the Nucleophile in catalysis.

Belongs to the class I-like SAM-binding methyltransferase superfamily. RNA M5U methyltransferase family. RlmD subfamily.

It carries out the reaction uridine(1939) in 23S rRNA + S-adenosyl-L-methionine = 5-methyluridine(1939) in 23S rRNA + S-adenosyl-L-homocysteine + H(+). Functionally, catalyzes the formation of 5-methyl-uridine at position 1939 (m5U1939) in 23S rRNA. The sequence is that of 23S rRNA (uracil(1939)-C(5))-methyltransferase RlmD from Shewanella baltica (strain OS223).